The primary structure comprises 220 residues: Small ribosomal subunit protein eS1 (220 aa).

Belongs to the eukaryotic ribosomal protein eS1 family.

The protein is Small ribosomal subunit protein eS1 of Methanococcus vannielii (strain ATCC 35089 / DSM 1224 / JCM 13029 / OCM 148 / SB).